Here is a 410-residue protein sequence, read N- to C-terminus: Elongation factor Tu, chloroplastic (410 aa).

The tr-type G domain maps to 10–215 (KPHVNIGTIG…IVDEYIPTPQ (206 aa)). Positions 19-26 (GHVDHGKT) are G1. Residue 19–26 (GHVDHGKT) participates in GTP binding. Threonine 26 provides a ligand contact to Mg(2+). The interval 61–65 (GITIN) is G2. The G3 stretch occupies residues 82 to 85 (DCPG). Residues 82–86 (DCPGH) and 137–140 (NKAD) each bind GTP. The tract at residues 137-140 (NKAD) is G4. Residues 175-177 (SAL) are G5.

This sequence belongs to the TRAFAC class translation factor GTPase superfamily. Classic translation factor GTPase family. EF-Tu/EF-1A subfamily.

It localises to the plastid. The protein resides in the chloroplast. It catalyses the reaction GTP + H2O = GDP + phosphate + H(+). Its function is as follows. GTP hydrolase that promotes the GTP-dependent binding of aminoacyl-tRNA to the A-site of ribosomes during protein biosynthesis. The chain is Elongation factor Tu, chloroplastic (tufA) from Cyanidioschyzon merolae (strain NIES-3377 / 10D) (Unicellular red alga).